A 1749-amino-acid chain; its full sequence is E3 ubiquitin-protein ligase UBR1 (1749 aa).

Ala2 carries the post-translational modification N-acetylalanine. Thr21 bears the Phosphothreonine mark. Residues 97 to 168 (QLCGRVFKSG…TGPFCVNHEP (72 aa)) form a UBR-type zinc finger. Positions 99, 112, 115, 124, 127, 133, and 136 each coordinate Zn(2+). A peptide is bound at residue Phe148. Cys149 serves as a coordination point for Zn(2+). Residue Asp150 participates in a peptide binding. Residue Cys151 participates in Zn(2+) binding. Residue Asp153 participates in a peptide binding. Residues Cys163 and His166 each contribute to the Zn(2+) site. Residues 842-868 (QHSKAEHMQKKRRKQENKDEALPPPPP) form a disordered region. Residues 1019-1054 (RKRKAEAARLHRQKIMAQMSALQKNFIETHKLMYDN) are UBC2-binding region (U2BR). Zn(2+) is bound by residues Cys1098, Cys1101, Cys1159, His1161, His1164, and Cys1167. The segment at 1098 to 1201 (CILCQEEQEV…SGEYLCPLCK (104 aa)) adopts an RING-type; atypical zinc-finger fold. Position 1179 is a phosphoserine (Ser1179). Zn(2+) is bound by residues Cys1197, Cys1200, Cys1627, Cys1630, and Cys1653.

Belongs to the E3 ubiquitin-protein ligase UBR1-like family. In terms of assembly, interacts with RECQL4. As to expression, broadly expressed, with highest levels in skeletal muscle, kidney and pancreas. Present in acinar cells of the pancreas (at protein level).

It is found in the cytoplasm. It localises to the cytosol. It catalyses the reaction S-ubiquitinyl-[E2 ubiquitin-conjugating enzyme]-L-cysteine + [acceptor protein]-L-lysine = [E2 ubiquitin-conjugating enzyme]-L-cysteine + N(6)-ubiquitinyl-[acceptor protein]-L-lysine.. Its pathway is protein modification; protein ubiquitination. Inhibited by the small-molecule compound RF-C11, which bears two heterovalent ligands: RF-C11 inhibits activity toward both type-1 and type-2 N-degrons. Functionally, E3 ubiquitin-protein ligase which is a component of the N-end rule pathway. Recognizes and binds proteins bearing specific N-terminal residues that are destabilizing according to the N-end rule, leading to their ubiquitination and subsequent degradation. Recognizes both type-1 and type-2 N-degrons, containing positively charged amino acids (Arg, Lys and His) and bulky and hydrophobic amino acids, respectively. Does not ubiquitinate proteins that are acetylated at the N-terminus. In contrast, it strongly binds methylated N-degrons. Binds leucine and is a negative regulator of the leucine-mTOR signaling pathway, thereby controlling cell growth. The polypeptide is E3 ubiquitin-protein ligase UBR1 (Homo sapiens (Human)).